An 806-amino-acid chain; its full sequence is Protein translocase subunit SecA (806 aa).

ATP contacts are provided by residues Gln87, 105–109, and Asp493; that span reads GEGKT.

It belongs to the SecA family. Monomer and homodimer. Part of the essential Sec protein translocation apparatus which comprises SecA, SecYEG and auxiliary proteins SecDF. Other proteins may also be involved.

Its subcellular location is the cell membrane. It localises to the cytoplasm. It catalyses the reaction ATP + H2O + cellular proteinSide 1 = ADP + phosphate + cellular proteinSide 2.. In terms of biological role, part of the Sec protein translocase complex. Interacts with the SecYEG preprotein conducting channel. Has a central role in coupling the hydrolysis of ATP to the transfer of proteins into and across the cell membrane, serving as an ATP-driven molecular motor driving the stepwise translocation of polypeptide chains across the membrane. In Mycoplasma genitalium (strain ATCC 33530 / DSM 19775 / NCTC 10195 / G37) (Mycoplasmoides genitalium), this protein is Protein translocase subunit SecA.